Here is a 384-residue protein sequence, read N- to C-terminus: Sensor protein VanS (384 aa).

The next 2 membrane-spanning stretches (helical) occupy residues 21–41 (MYIV…RSMI) and 76–96 (IDIF…RVML). The 216-residue stretch at 161 to 376 (YLAHDIKTPL…TFRVELPAMP (216 aa)) folds into the Histidine kinase domain. Phosphohistidine; by autocatalysis is present on histidine 164. The involved in low-affinity ATP-binding. Exhibits higher affinity for ATP than GTP stretch occupies residues 221–384 (QTITLTKTHI…MPDLVDKRRS (164 aa)).

In terms of processing, autophosphorylated.

It localises to the membrane. It catalyses the reaction ATP + protein L-histidine = ADP + protein N-phospho-L-histidine.. Its activity is regulated as follows. Phosphorylation of VanR inhibited by EDTA. Its function is as follows. Member of the two-component regulatory system VanS/VanR. Functions as a sensor protein kinase which is autophosphorylated at a histidine residue in response to environmental stimuli, such as glycopeptide antibiotics. VanS transfers its phosphate group to transcriptional regulatory protein VanR, thereby modulating expression of target genes. Binds directly to, and autophosphorylation activity is enhanced by, the glycopeptides vancomycin and teicoplanin, in vitro. However it has also been reported that autophosphorylation, phosphate transfer to VanR and dephosphorylation of phospho-VanR are all unaffected by the presence of vancomycin, in vitro. In the absence of vancomycin, negatively regulates VanR-mediated activation of vanS, vanH, vanA and vanX, probably as a result of dephosphorylating phospho-VanR. May inhibit promoter-specific DNA binding by VanR. Involved in conferring vancomycin resistance. The protein is Sensor protein VanS of Enterococcus faecium (Streptococcus faecium).